The primary structure comprises 353 residues: Peptide chain release factor 1 (353 aa).

Gln-230 bears the N5-methylglutamine mark.

The protein belongs to the prokaryotic/mitochondrial release factor family. Post-translationally, methylated by PrmC. Methylation increases the termination efficiency of RF1.

The protein resides in the cytoplasm. Peptide chain release factor 1 directs the termination of translation in response to the peptide chain termination codons UAG and UAA. The chain is Peptide chain release factor 1 from Leptospira biflexa serovar Patoc (strain Patoc 1 / ATCC 23582 / Paris).